Here is a 183-residue protein sequence, read N- to C-terminus: Peptide deformylase (183 aa).

Residues Cys111 and His154 each contribute to the Fe cation site. The active site involves Glu155. A Fe cation-binding site is contributed by His158.

Fe(2+) serves as cofactor.

The catalysed reaction is N-terminal N-formyl-L-methionyl-[peptide] + H2O = N-terminal L-methionyl-[peptide] + formate. In terms of biological role, removes the formyl group from the N-terminal Met of newly synthesized proteins. Requires at least a dipeptide for an efficient rate of reaction. N-terminal L-methionine is a prerequisite for activity but the enzyme has broad specificity at other positions. This chain is Peptide deformylase, found in Staphylococcus aureus.